The following is a 492-amino-acid chain: Glutamyl-tRNA(Gln) amidotransferase subunit A (492 aa).

Residues K78 and S158 each act as charge relay system in the active site. The active-site Acyl-ester intermediate is the S182.

It belongs to the amidase family. GatA subfamily. Heterotrimer of A, B and C subunits.

It carries out the reaction L-glutamyl-tRNA(Gln) + L-glutamine + ATP + H2O = L-glutaminyl-tRNA(Gln) + L-glutamate + ADP + phosphate + H(+). Functionally, allows the formation of correctly charged Gln-tRNA(Gln) through the transamidation of misacylated Glu-tRNA(Gln) in organisms which lack glutaminyl-tRNA synthetase. The reaction takes place in the presence of glutamine and ATP through an activated gamma-phospho-Glu-tRNA(Gln). This is Glutamyl-tRNA(Gln) amidotransferase subunit A from Parvibaculum lavamentivorans (strain DS-1 / DSM 13023 / NCIMB 13966).